A 288-amino-acid chain; its full sequence is Elongation factor Ts (288 aa).

Positions 80-83 (TDFV) are involved in Mg(2+) ion dislocation from EF-Tu.

It belongs to the EF-Ts family.

The protein resides in the cytoplasm. In terms of biological role, associates with the EF-Tu.GDP complex and induces the exchange of GDP to GTP. It remains bound to the aminoacyl-tRNA.EF-Tu.GTP complex up to the GTP hydrolysis stage on the ribosome. The polypeptide is Elongation factor Ts (Chromobacterium violaceum (strain ATCC 12472 / DSM 30191 / JCM 1249 / CCUG 213 / NBRC 12614 / NCIMB 9131 / NCTC 9757 / MK)).